The following is a 153-amino-acid chain: Large ribosomal subunit protein uL23m (153 aa).

Residues 110–153 (IFPEKDKKSKEGSVEEMHEKFMEDERQRQKPDPRRGGVTEWFGL) form a disordered region. Basic and acidic residues predominate over residues 111–146 (FPEKDKKSKEGSVEEMHEKFMEDERQRQKPDPRRGG).

It belongs to the universal ribosomal protein uL23 family. In terms of assembly, component of the mitochondrial ribosome large subunit (39S) which comprises a 16S rRNA and about 50 distinct proteins.

It is found in the mitochondrion. In Danio rerio (Zebrafish), this protein is Large ribosomal subunit protein uL23m (mrpl23).